Reading from the N-terminus, the 214-residue chain is Ribosomal RNA small subunit methyltransferase G (214 aa).

S-adenosyl-L-methionine is bound by residues Gly-78, Leu-83, 129–130, and Arg-144; that span reads AE.

Belongs to the methyltransferase superfamily. RNA methyltransferase RsmG family.

It localises to the cytoplasm. It carries out the reaction guanosine(527) in 16S rRNA + S-adenosyl-L-methionine = N(7)-methylguanosine(527) in 16S rRNA + S-adenosyl-L-homocysteine. Specifically methylates the N7 position of guanine in position 527 of 16S rRNA. This chain is Ribosomal RNA small subunit methyltransferase G, found in Marinobacter nauticus (strain ATCC 700491 / DSM 11845 / VT8) (Marinobacter aquaeolei).